The sequence spans 445 residues: Phosphoglucosamine mutase (445 aa).

Ser105 serves as the catalytic Phosphoserine intermediate. The Mg(2+) site is built by Ser105, Asp244, Asp246, and Asp248. Ser105 is subject to Phosphoserine.

It belongs to the phosphohexose mutase family. The cofactor is Mg(2+). Post-translationally, activated by phosphorylation.

It catalyses the reaction alpha-D-glucosamine 1-phosphate = D-glucosamine 6-phosphate. Functionally, catalyzes the conversion of glucosamine-6-phosphate to glucosamine-1-phosphate. This chain is Phosphoglucosamine mutase, found in Janthinobacterium sp. (strain Marseille) (Minibacterium massiliensis).